Reading from the N-terminus, the 546-residue chain is FAD-dependent monooxygenase (546 aa).

An N-terminal signal peptide occupies residues 1–17 (MYDVIVVGAGWCGLAAA). Position 106 (I106) interacts with FAD. 2 N-linked (GlcNAc...) asparagine glycosylation sites follow: N239 and N343.

Belongs to the FAD-binding monooxygenase family. It depends on FAD as a cofactor.

Its pathway is antifungal biosynthesis. Functionally, FAD-dependent monooxygenase; part of the gene cluster that mediates the biosynthesis of the tetrahydropyranyl antifungal agent lanomycin that acts as an inhibitor of CYP51 and blocks the ergosterol biosynthesis. The biosynthesis probably begins with the formation of an hexaketide, followed by methionine mediated alkylation of C-2 and C-6, and methylation of the reduced C-3 oxygen, pyran forming reductive ring closure, oxygenation of C-4, beta-keto reduction, enoyl reduction and dehydration of the remaining oxygens, and finally, acylation with glycine to complete the biosynthesis. This is FAD-dependent monooxygenase from Pyrenophora dematioidea (Helminthosporium dematioideum).